Reading from the N-terminus, the 103-residue chain is NADH-quinone oxidoreductase subunit K (103 aa).

The next 3 membrane-spanning stretches (helical) occupy residues 5-25, 30-50, and 66-86; these read ISSY…GALT, VVVL…LVAF, and LFTM…LIAL.

It belongs to the complex I subunit 4L family. NDH-1 is composed of 14 different subunits. Subunits NuoA, H, J, K, L, M, N constitute the membrane sector of the complex.

Its subcellular location is the cell membrane. The catalysed reaction is a quinone + NADH + 5 H(+)(in) = a quinol + NAD(+) + 4 H(+)(out). Its function is as follows. NDH-1 shuttles electrons from NADH, via FMN and iron-sulfur (Fe-S) centers, to quinones in the respiratory chain. The immediate electron acceptor for the enzyme in this species is believed to be a menaquinone. Couples the redox reaction to proton translocation (for every two electrons transferred, four hydrogen ions are translocated across the cytoplasmic membrane), and thus conserves the redox energy in a proton gradient. This Brevibacillus brevis (strain 47 / JCM 6285 / NBRC 100599) protein is NADH-quinone oxidoreductase subunit K.